Consider the following 417-residue polypeptide: Peptide chain release factor subunit 1 (417 aa).

This sequence belongs to the eukaryotic release factor 1 family. As to quaternary structure, heterodimer of two subunits, one of which binds GTP.

The protein localises to the cytoplasm. Its function is as follows. Directs the termination of nascent peptide synthesis (translation) in response to the termination codons UAA, UAG and UGA. This Thermoplasma acidophilum (strain ATCC 25905 / DSM 1728 / JCM 9062 / NBRC 15155 / AMRC-C165) protein is Peptide chain release factor subunit 1 (prf1).